Reading from the N-terminus, the 211-residue chain is Pyridoxine/pyridoxamine 5'-phosphate oxidase (211 aa).

Residues 8–11 and Lys66 contribute to the substrate site; that span reads RRDY. Residues 61 to 66, 76 to 77, Arg82, Lys83, and Gln105 contribute to the FMN site; these read RLVLLK and FT. 3 residues coordinate substrate: Tyr123, Arg127, and Ser131. FMN is bound by residues 140 to 141 and Trp184; that span reads QS. 190–192 contacts substrate; sequence RLH. Position 194 (Arg194) interacts with FMN.

The protein belongs to the pyridoxamine 5'-phosphate oxidase family. In terms of assembly, homodimer. FMN serves as cofactor.

The enzyme catalyses pyridoxamine 5'-phosphate + O2 + H2O = pyridoxal 5'-phosphate + H2O2 + NH4(+). It catalyses the reaction pyridoxine 5'-phosphate + O2 = pyridoxal 5'-phosphate + H2O2. The protein operates within cofactor metabolism; pyridoxal 5'-phosphate salvage; pyridoxal 5'-phosphate from pyridoxamine 5'-phosphate: step 1/1. It functions in the pathway cofactor metabolism; pyridoxal 5'-phosphate salvage; pyridoxal 5'-phosphate from pyridoxine 5'-phosphate: step 1/1. Catalyzes the oxidation of either pyridoxine 5'-phosphate (PNP) or pyridoxamine 5'-phosphate (PMP) into pyridoxal 5'-phosphate (PLP). In Thermosynechococcus vestitus (strain NIES-2133 / IAM M-273 / BP-1), this protein is Pyridoxine/pyridoxamine 5'-phosphate oxidase.